A 794-amino-acid polypeptide reads, in one-letter code: Copper-exporting P-type ATPase (794 aa).

HMA domains lie at 5–70 (KKTT…YGVL) and 72–138 (ETAE…YDAQ). Cu(+)-binding residues include Cys-16, Cys-19, Cys-83, and Cys-86. 6 helical membrane-spanning segments follow: residues 162–182 (IISA…LFGI), 187–207 (IFMN…IIGW), 224–244 (MDVL…YEMV), 250–270 (ANVM…LILF), 411–431 (YFVP…IAFV), and 438–458 (PALV…LGLA). Asp-495 acts as the 4-aspartylphosphate intermediate in catalysis. Mg(2+) contacts are provided by Asp-689 and Asp-693. Transmembrane regions (helical) follow at residues 747–766 (LFWA…LGLL) and 770–789 (IAGA…ALRL).

Belongs to the cation transport ATPase (P-type) (TC 3.A.3) family. Type IB subfamily.

The protein localises to the cell membrane. The catalysed reaction is Cu(+)(in) + ATP + H2O = Cu(+)(out) + ADP + phosphate + H(+). Functionally, involved in copper export. This Staphylococcus saprophyticus subsp. saprophyticus (strain ATCC 15305 / DSM 20229 / NCIMB 8711 / NCTC 7292 / S-41) protein is Copper-exporting P-type ATPase (copA).